Here is a 291-residue protein sequence, read N- to C-terminus: Kidney mitochondrial carrier protein 1 (291 aa).

At Ser-2 the chain carries N-acetylserine. 3 Solcar repeats span residues 7 to 96 (KPFV…LKRL), 104 to 189 (ETLL…TKKH), and 198 to 289 (DTVA…LKKL). Helical transmembrane passes span 9–26 (FVYGGLASITAECGTFPI), 71–89 (GIAPAMLRQASYGTIKIGT), 106–124 (LLVNVVCGILSGVISSAIA), 164–183 (GVSLTAQRAAIVVGVELPVY), 204–224 (FLSSFTCGLVGALASNPVDVV), and 264–283 (GFWPNWLRLGPWNIIFFLTY).

Belongs to the mitochondrial carrier (TC 2.A.29) family. As to quaternary structure, interacts with VDAC1. As to expression, present in kidney (at protein level). Expressed predominantly within the kidney cortex in the proximal and distal tubules and at lower levels in the testis and white adipose tissue.

The protein resides in the mitochondrion inner membrane. It catalyses the reaction sulfite(in) + sulfate(out) = sulfite(out) + sulfate(in). It carries out the reaction thiosulfate(in) + sulfate(out) = thiosulfate(out) + sulfate(in). The catalysed reaction is sulfate(out) + phosphate(in) = sulfate(in) + phosphate(out). The enzyme catalyses oxalate(in) + sulfate(out) = oxalate(out) + sulfate(in). It catalyses the reaction malonate(in) + sulfate(out) = malonate(out) + sulfate(in). It carries out the reaction maleate(in) + sulfate(out) = maleate(out) + sulfate(in). The catalysed reaction is (S)-malate(in) + sulfate(out) = (S)-malate(out) + sulfate(in). The enzyme catalyses (3S)-citramalate(in) + sulfate(out) = (3S)-citramalate(out) + sulfate(in). It catalyses the reaction (3R)-citramalate(in) + sulfate(out) = (3R)-citramalate(out) + sulfate(in). It carries out the reaction sulfate(out) + succinate(in) = sulfate(in) + succinate(out). The catalysed reaction is (S,S)-tartrate(in) + sulfate(out) = (S,S)-tartrate(out) + sulfate(in). The enzyme catalyses (2R,3R)-tartrate(in) + sulfate(out) = (2R,3R)-tartrate(out) + sulfate(in). It catalyses the reaction D-aspartate(in) + sulfate(out) = D-aspartate(out) + sulfate(in). It carries out the reaction L-aspartate(in) + sulfate(out) = L-aspartate(out) + sulfate(in). The catalysed reaction is sulfate(in) = sulfate(out). The enzyme catalyses phosphate(in) = phosphate(out). It catalyses the reaction (S)-malate(out) = (S)-malate(in). Functionally, antiporter that transports inorganic anions (sulfate, sulfite, thiosulfate and phosphate) and, to a lesser extent, a variety of dicarboxylates (e.g. malonate, malate and citramalate) and, even more so, aspartate. The sulfate/sulfate exchange is much higher than the phosphate/phosphate and malate/malate exchanges. The transport affinities is higher for sulfate and thiosulfate than for any other substrate. May catalyze the export of sulfite and thiosulfate (the hydrogen sulfide degradation products) from the mitochondria, thereby modulating the level of the hydrogen sulfide. Also may mediate a very low unidirectional transport of sulfate, phosphate and (S)-malate. This chain is Kidney mitochondrial carrier protein 1, found in Mus musculus (Mouse).